The following is a 303-amino-acid chain: Aspartate carbamoyltransferase catalytic subunit (303 aa).

2 residues coordinate carbamoyl phosphate: Arg-49 and Thr-50. Lys-77 is an L-aspartate binding site. Carbamoyl phosphate-binding residues include Arg-99, His-126, and Gln-129. L-aspartate is bound by residues Arg-159 and Arg-211. Carbamoyl phosphate is bound by residues Ser-252 and Pro-253.

Belongs to the aspartate/ornithine carbamoyltransferase superfamily. ATCase family. As to quaternary structure, heterododecamer (2C3:3R2) of six catalytic PyrB chains organized as two trimers (C3), and six regulatory PyrI chains organized as three dimers (R2).

It carries out the reaction carbamoyl phosphate + L-aspartate = N-carbamoyl-L-aspartate + phosphate + H(+). It participates in pyrimidine metabolism; UMP biosynthesis via de novo pathway; (S)-dihydroorotate from bicarbonate: step 2/3. In terms of biological role, catalyzes the condensation of carbamoyl phosphate and aspartate to form carbamoyl aspartate and inorganic phosphate, the committed step in the de novo pyrimidine nucleotide biosynthesis pathway. This is Aspartate carbamoyltransferase catalytic subunit from Listeria welshimeri serovar 6b (strain ATCC 35897 / DSM 20650 / CCUG 15529 / CIP 8149 / NCTC 11857 / SLCC 5334 / V8).